We begin with the raw amino-acid sequence, 644 residues long: Exoribonuclease 2 (644 aa).

Positions 189–516 (REDLTALDFV…NHRLLKAVIK (328 aa)) constitute an RNB domain. In terms of domain architecture, S1 motif spans 561-643 (DTRFAAEIVD…ETRSIIARPV (83 aa)).

This sequence belongs to the RNR ribonuclease family. RNase II subfamily.

It localises to the cytoplasm. The catalysed reaction is Exonucleolytic cleavage in the 3'- to 5'-direction to yield nucleoside 5'-phosphates.. Involved in mRNA degradation. Hydrolyzes single-stranded polyribonucleotides processively in the 3' to 5' direction. The sequence is that of Exoribonuclease 2 from Shigella dysenteriae serotype 1 (strain Sd197).